Here is a 111-residue protein sequence, read N- to C-terminus: Toxin 3FTx-Tel4 (111 aa).

The first 19 residues, 1-19, serve as a signal peptide directing secretion; sequence MKTLLLALVVVAFMCLGSA. The propeptide occupies 20-34; the sequence is DQLGLGSQRIDWEQG. Gln35 is subject to Pyrrolidone carboxylic acid. Intrachain disulfides connect Cys44–Cys68, Cys47–Cys55, Cys61–Cys87, Cys91–Cys102, and Cys103–Cys108.

The protein belongs to the three-finger toxin family. Ancestral subfamily. Boigatoxin sub-subfamily. Expressed by the venom gland.

Its subcellular location is the secreted. Functionally, potent postsynaptic neurotoxin. Displays readily reversible competitive antagonism at the nicotinic acetylcholine receptor (nAChR). In Telescopus dhara (Egyptian catsnake), this protein is Toxin 3FTx-Tel4.